The sequence spans 230 residues: Transcription factor bHLH147 (230 aa).

The segment covering 1–17 (MESISPVSNQLLQPTTT) has biased composition (polar residues). A disordered region spans residues 1–52 (MESISPVSNQLLQPTTTSSNSDRSRRKRKKKSSPSSVEKSPSPSISLEKWRS). Low complexity predominate over residues 33–46 (SPSSVEKSPSPSIS). One can recognise a bHLH domain in the interval 147 to 196 (KQRATVLRLKAKGLPAVQRKVKVLSRLVPGCRKQSLPVVLEETTDYIAAM). The segment at 210–230 (VSSSPPPPTPGHEGGQTHMLG) is disordered.

As to quaternary structure, homodimer. Interacts with PRE3.

It is found in the nucleus. Atypical bHLH transcription factor probably unable to bind DNA. Negatively regulates brassinosteroid signaling. The polypeptide is Transcription factor bHLH147 (BHLH147) (Arabidopsis thaliana (Mouse-ear cress)).